The chain runs to 257 residues: Zinc transporter ZupT (257 aa).

The next 8 helical transmembrane spans lie at 5-25, 32-52, 61-81, 109-129, 137-157, 171-191, 195-215, and 236-256; these read LILT…GVLG, VLAF…LMEM, GMSP…YFGL, AILL…ATFV, LGFG…LAVA, IFWA…AWLI, LVSP…MVAL, and GVLC…TIGI. Fe(2+) contacts are provided by asparagine 120 and glutamate 123. 2 residues coordinate Zn(2+): glutamate 123 and histidine 148. The Fe(2+) site is built by asparagine 149, glutamate 152, and glutamate 181. Glutamate 152 provides a ligand contact to Zn(2+).

The protein belongs to the ZIP transporter (TC 2.A.5) family. ZupT subfamily.

The protein resides in the cell inner membrane. The catalysed reaction is Zn(2+)(in) = Zn(2+)(out). In terms of biological role, mediates zinc uptake. May also transport other divalent cations. The polypeptide is Zinc transporter ZupT (Salmonella heidelberg (strain SL476)).